A 466-amino-acid polypeptide reads, in one-letter code: Glutamate decarboxylase beta (466 aa).

Substrate contacts are provided by T62 and N83. Pyridoxal 5'-phosphate is bound by residues 126-127, T212, and H275; that span reads SS. K276 is subject to N6-(pyridoxal phosphate)lysine. N6-acetyllysine is present on residues K446, K453, and K464.

It belongs to the group II decarboxylase family. As to quaternary structure, homohexamer composed of three dimers. The cofactor is pyridoxal 5'-phosphate.

The enzyme catalyses L-glutamate + H(+) = 4-aminobutanoate + CO2. In terms of biological role, converts glutamate to gamma-aminobutyrate (GABA), consuming one intracellular proton in the reaction. The gad system helps to maintain a near-neutral intracellular pH when cells are exposed to extremely acidic conditions. The ability to survive transit through the acidic conditions of the stomach is essential for successful colonization of the mammalian host by commensal and pathogenic bacteria. In Escherichia coli O6:H1 (strain CFT073 / ATCC 700928 / UPEC), this protein is Glutamate decarboxylase beta (gadB).